The primary structure comprises 60 residues: Large ribosomal subunit protein bL32B (60 aa).

Over residues 1–19 (MAVPKRKMSRANTRHRRSQ) the composition is skewed to basic residues. The tract at residues 1-20 (MAVPKRKMSRANTRHRRSQW) is disordered.

The protein belongs to the bacterial ribosomal protein bL32 family.

This is Large ribosomal subunit protein bL32B from Saccharopolyspora erythraea (strain ATCC 11635 / DSM 40517 / JCM 4748 / NBRC 13426 / NCIMB 8594 / NRRL 2338).